We begin with the raw amino-acid sequence, 111 residues long: Pyrimidine/purine nucleoside phosphorylase 1 (111 aa).

Belongs to the nucleoside phosphorylase PpnP family.

The catalysed reaction is a purine D-ribonucleoside + phosphate = a purine nucleobase + alpha-D-ribose 1-phosphate. The enzyme catalyses adenosine + phosphate = alpha-D-ribose 1-phosphate + adenine. It carries out the reaction cytidine + phosphate = cytosine + alpha-D-ribose 1-phosphate. It catalyses the reaction guanosine + phosphate = alpha-D-ribose 1-phosphate + guanine. The catalysed reaction is inosine + phosphate = alpha-D-ribose 1-phosphate + hypoxanthine. The enzyme catalyses thymidine + phosphate = 2-deoxy-alpha-D-ribose 1-phosphate + thymine. It carries out the reaction uridine + phosphate = alpha-D-ribose 1-phosphate + uracil. It catalyses the reaction xanthosine + phosphate = alpha-D-ribose 1-phosphate + xanthine. In terms of biological role, catalyzes the phosphorolysis of diverse nucleosides, yielding D-ribose 1-phosphate and the respective free bases. Can use uridine, adenosine, guanosine, cytidine, thymidine, inosine and xanthosine as substrates. Also catalyzes the reverse reactions. This is Pyrimidine/purine nucleoside phosphorylase 1 from Psychrobacter cryohalolentis (strain ATCC BAA-1226 / DSM 17306 / VKM B-2378 / K5).